The chain runs to 154 residues: Ribonuclease P protein component (154 aa).

It belongs to the RnpA family. Consists of a catalytic RNA component (M1 or rnpB) and a protein subunit.

The catalysed reaction is Endonucleolytic cleavage of RNA, removing 5'-extranucleotides from tRNA precursor.. Its function is as follows. RNaseP catalyzes the removal of the 5'-leader sequence from pre-tRNA to produce the mature 5'-terminus. It can also cleave other RNA substrates such as 4.5S RNA. The protein component plays an auxiliary but essential role in vivo by binding to the 5'-leader sequence and broadening the substrate specificity of the ribozyme. The protein is Ribonuclease P protein component of Chlorobaculum tepidum (strain ATCC 49652 / DSM 12025 / NBRC 103806 / TLS) (Chlorobium tepidum).